Reading from the N-terminus, the 228-residue chain is Urease accessory protein UreE (228 aa).

The tract at residues 188 to 228 is disordered; the sequence is PLDEPHGSGLHIHAIHSHGDGHSHDHDHSHSHGDHDHDHKH. Residues 204–228 are compositionally biased toward basic and acidic residues; that stretch reads SHGDGHSHDHDHSHSHGDHDHDHKH.

This sequence belongs to the UreE family.

It is found in the cytoplasm. Involved in urease metallocenter assembly. Binds nickel. Probably functions as a nickel donor during metallocenter assembly. In Yersinia kristensenii, this protein is Urease accessory protein UreE.